The following is a 281-amino-acid chain: Proteasome subunit beta 2 (281 aa).

Residues 1 to 53 constitute a propeptide, removed in mature form; by autocatalysis; sequence MEANTRSTGRLPAAFLTPGSSSFMDFLSEHQPEILPGNRQLPPTQGVIEAPHG. The Nucleophile role is filled by Thr54.

Belongs to the peptidase T1B family. As to quaternary structure, the 20S proteasome core is composed of 14 alpha and 14 beta subunits that assemble into four stacked heptameric rings, resulting in a barrel-shaped structure. The two inner rings, each composed of seven catalytic beta subunits, are sandwiched by two outer rings, each composed of seven alpha subunits. The catalytic chamber with the active sites is on the inside of the barrel. Has a gated structure, the ends of the cylinder being occluded by the N-termini of the alpha-subunits. Is capped by the proteasome-associated ATPase, ARC.

The protein localises to the cytoplasm. It carries out the reaction Cleavage of peptide bonds with very broad specificity.. It participates in protein degradation; proteasomal Pup-dependent pathway. Its activity is regulated as follows. The formation of the proteasomal ATPase ARC-20S proteasome complex, likely via the docking of the C-termini of ARC into the intersubunit pockets in the alpha-rings, may trigger opening of the gate for substrate entry. Interconversion between the open-gate and close-gate conformations leads to a dynamic regulation of the 20S proteasome proteolysis activity. Its function is as follows. Component of the proteasome core, a large protease complex with broad specificity involved in protein degradation. The protein is Proteasome subunit beta 2 of Streptomyces avermitilis (strain ATCC 31267 / DSM 46492 / JCM 5070 / NBRC 14893 / NCIMB 12804 / NRRL 8165 / MA-4680).